A 126-amino-acid polypeptide reads, in one-letter code: Copper resistance protein C (126 aa).

A signal peptide spans 1–24; that stretch reads MLLNRTSFVTLFAAGMLVSALAQA. Cu(2+) is bound at residue H25. 5 residues coordinate Cu(+): M64, M67, M70, H72, and M75. H115 lines the Cu(2+) pocket.

Belongs to the CopC family. Monomer.

It is found in the periplasm. With respect to regulation, the redox state of copper bound to CopC may act as a switch between the possible trafficking pathways of the metal ion. In terms of biological role, copper-binding protein involved in copper resistance and homeostasis. Probably mediates copper resistance by sequestering the excess of copper in the periplasm. May act as a copper carrier in the oxidizing periplasmic space that exchanges either Cu(I) or Cu(II) with its putative partners CopA, CopB and CopD. This Pseudomonas syringae pv. tomato protein is Copper resistance protein C.